A 269-amino-acid polypeptide reads, in one-letter code: UPF0761 membrane protein HI_0276 (269 aa).

6 consecutive transmembrane segments (helical) span residues 32 to 52, 89 to 109, 128 to 148, 168 to 188, 203 to 223, and 232 to 252; these read MLAM…FPVF, MSAV…NNID, FAIY…SIGI, LLSF…YTVV, FLAA…IVTF, and AMAT…VVLV.

It belongs to the UPF0761 family.

It is found in the cell inner membrane. The protein is UPF0761 membrane protein HI_0276 of Haemophilus influenzae (strain ATCC 51907 / DSM 11121 / KW20 / Rd).